Consider the following 363-residue polypeptide: Spermatogenesis-associated protein 22 (363 aa).

4 stretches are compositionally biased toward polar residues: residues 1–12 (MKRSLNENSARS), 30–48 (QPLTSNPLKDDSGISTPSD), 98–108 (IQSNTGRSQGG), and 140–157 (NDGKNSCPVSSGAQQQKQ). Disordered regions lie at residues 1 to 51 (MKRS…DNYD), 98 to 127 (IQSNTGRSQGGWSYRDGNKNTSLKTWNKND), and 140 to 170 (NDGKNSCPVSSGAQQQKQLRIPEPPNLSRNK).

Component of a multiprotein complex with MEIOB and RPA2. Interacts with MEIOB. Interacts with the complex BRME1:HSF2BP:BRCA2. As to expression, highly expressed in adult testis.

The protein localises to the chromosome. Its function is as follows. Meiosis-specific protein required for homologous recombination in meiosis I. The polypeptide is Spermatogenesis-associated protein 22 (Homo sapiens (Human)).